The chain runs to 248 residues: MSPSATVFDIGGNAVGTLQLVGHLFDSDPNLHLIHQVVVAQQAAFRQGTHKTKSRAEVSGSGRKPFRQKGTGNARCGSTRAPQMRGGGVVHGPVPRSYVHRTPKKMIKAALAGCLTNRARAGRVHIVDSFGDTPSVADALTLFQITGLSSKLLVVAQASDSVAYRSVRNIPGVRLVHVGQLNSYDVLRSDDVLFTRGAYNVFVGPSGDLAFSEDRDNPGTSLPKSPTPEDSSDATKARSSRHDDRTGA.

Disordered regions lie at residues 48-95 and 210-248; these read GTHK…GPVP and AFSE…RTGA. Basic and acidic residues predominate over residues 233 to 248; it reads DATKARSSRHDDRTGA.

It belongs to the universal ribosomal protein uL4 family. As to quaternary structure, part of the 50S ribosomal subunit.

Functionally, one of the primary rRNA binding proteins, this protein initially binds near the 5'-end of the 23S rRNA. It is important during the early stages of 50S assembly. It makes multiple contacts with different domains of the 23S rRNA in the assembled 50S subunit and ribosome. Forms part of the polypeptide exit tunnel. This Tropheryma whipplei (strain TW08/27) (Whipple's bacillus) protein is Large ribosomal subunit protein uL4.